A 512-amino-acid chain; its full sequence is Spastin homolog (512 aa).

Over 1-274 (MFAFSKGPAG…FKGLRQPVKG (274 aa)) the chain is Cytoplasmic. Residues 32-97 (IEMDELTKHA…MKLEKSAQDR (66 aa)) adopt a coiled-coil conformation. Residues 110 to 182 (KQSRSATVGP…SDTVHPEPPV (73 aa)) are disordered. The tract at residues 115 to 233 (ATVGPSRPAS…ERLLDEVLDN (119 aa)) is MTBD. Residues 137–163 (APEKKNAAKAKENDENRHVCSRGDRCG) show a composition bias toward basic and acidic residues. Residues 275 to 294 (ILLFGPPGNGKTLLAKAVAG) constitute an intramembrane region (helical). Residue 279–286 (GPPGNGKT) participates in ATP binding. Residues 295 to 512 (ESKQMFFNIS…LSDFSRSFGC (218 aa)) are Cytoplasmic-facing.

Belongs to the AAA ATPase family. Spastin subfamily. Homohexamer. The homohexamer is stabilized by ATP-binding. The homohexamer may adopt a ring conformation through which microtubules pass prior to being severed. Interacts with microtubules. Interacts (via N-terminus) with tubulin; the interaction is direct.

The protein localises to the membrane. It is found in the cytoplasm. Its subcellular location is the cytoskeleton. The protein resides in the perinuclear region. The catalysed reaction is n ATP + n H2O + a microtubule = n ADP + n phosphate + (n+1) alpha/beta tubulin heterodimers.. Functionally, ATP-dependent microtubule severing protein that specifically recognizes and cuts microtubules. Probably by regulating microtubule remodeling, plays a role in new synapse formation in GABAergic DD (Dorsal D type) neurons. The sequence is that of Spastin homolog from Caenorhabditis elegans.